The chain runs to 620 residues: Chaperone protein HscA homolog (620 aa).

Belongs to the heat shock protein 70 family.

Chaperone involved in the maturation of iron-sulfur cluster-containing proteins. Has a low intrinsic ATPase activity which is markedly stimulated by HscB. In Bordetella pertussis (strain Tohama I / ATCC BAA-589 / NCTC 13251), this protein is Chaperone protein HscA homolog.